A 264-amino-acid polypeptide reads, in one-letter code: L-aspartate dehydrogenase (264 aa).

NAD(+) is bound by residues Ala120 and Asn186. The active site involves His216.

This sequence belongs to the L-aspartate dehydrogenase family.

It carries out the reaction L-aspartate + NADP(+) + H2O = oxaloacetate + NH4(+) + NADPH + H(+). The catalysed reaction is L-aspartate + NAD(+) + H2O = oxaloacetate + NH4(+) + NADH + H(+). Its pathway is cofactor biosynthesis; NAD(+) biosynthesis; iminoaspartate from L-aspartate (dehydrogenase route): step 1/1. Functionally, specifically catalyzes the NAD or NADP-dependent dehydrogenation of L-aspartate to iminoaspartate. The protein is L-aspartate dehydrogenase of Serratia proteamaculans (strain 568).